The sequence spans 398 residues: Acetate kinase (398 aa).

Asn-7 serves as a coordination point for Mg(2+). Residue Lys-14 coordinates ATP. Position 91 (Arg-91) interacts with substrate. Asp-148 functions as the Proton donor/acceptor in the catalytic mechanism. Residues 208 to 212 (HLGNG), 282 to 284 (DFR), and 330 to 334 (GVGEN) each bind ATP. Position 383 (Glu-383) interacts with Mg(2+).

The protein belongs to the acetokinase family. In terms of assembly, homodimer. It depends on Mg(2+) as a cofactor. Mn(2+) serves as cofactor.

Its subcellular location is the cytoplasm. It catalyses the reaction acetate + ATP = acetyl phosphate + ADP. Its pathway is metabolic intermediate biosynthesis; acetyl-CoA biosynthesis; acetyl-CoA from acetate: step 1/2. Its function is as follows. Catalyzes the formation of acetyl phosphate from acetate and ATP. Can also catalyze the reverse reaction. The sequence is that of Acetate kinase from Carboxydothermus hydrogenoformans (strain ATCC BAA-161 / DSM 6008 / Z-2901).